Reading from the N-terminus, the 329-residue chain is MMKKYYESDADLSVLSGKKIAVIGYGSQGRGQSLNLRDSGLDVIIGLRKGKSWDAAAKDGMNVMTVAEAAKKADIIQILLPDELQAAVYKNEILPHLSENKVLMFSHGFNIHFGQIQPPGNVDVIMVAPKGPGFMVRRQYEEGKGVPALIAIHQDHTCKAHKTALAYAKGIGATRAVVLETTFREETETDLFGEQAVLCGGTASLIKAGFETLVDAGYAPEMAYLEVCHELKLIVDLIYEGGLTNMRQYVSNTAQYGDMTRGPRVIGPEAYEAMEEILAEIQSGEFAKEWMLENMVNRPVFNALTKADEEHLLEETGKEVRAMMPQFRK.

In terms of domain architecture, KARI N-terminal Rossmann spans 2–181 (MKKYYESDAD…GATRAVVLET (180 aa)). NADP(+)-binding positions include 25–28 (YGSQ), Arg48, Ser52, and 82–85 (DELQ). The active site involves His107. Gly133 contacts NADP(+). One can recognise a KARI C-terminal knotted domain in the interval 182-327 (TFREETETDL…KEVRAMMPQF (146 aa)). Positions 190, 194, 226, and 230 each coordinate Mg(2+). Position 251 (Ser251) interacts with substrate.

It belongs to the ketol-acid reductoisomerase family. Mg(2+) is required as a cofactor.

It catalyses the reaction (2R)-2,3-dihydroxy-3-methylbutanoate + NADP(+) = (2S)-2-acetolactate + NADPH + H(+). The catalysed reaction is (2R,3R)-2,3-dihydroxy-3-methylpentanoate + NADP(+) = (S)-2-ethyl-2-hydroxy-3-oxobutanoate + NADPH + H(+). The protein operates within amino-acid biosynthesis; L-isoleucine biosynthesis; L-isoleucine from 2-oxobutanoate: step 2/4. It functions in the pathway amino-acid biosynthesis; L-valine biosynthesis; L-valine from pyruvate: step 2/4. Its function is as follows. Involved in the biosynthesis of branched-chain amino acids (BCAA). Catalyzes an alkyl-migration followed by a ketol-acid reduction of (S)-2-acetolactate (S2AL) to yield (R)-2,3-dihydroxy-isovalerate. In the isomerase reaction, S2AL is rearranged via a Mg-dependent methyl migration to produce 3-hydroxy-3-methyl-2-ketobutyrate (HMKB). In the reductase reaction, this 2-ketoacid undergoes a metal-dependent reduction by NADPH to yield (R)-2,3-dihydroxy-isovalerate. This Methanoregula boonei (strain DSM 21154 / JCM 14090 / 6A8) protein is Ketol-acid reductoisomerase (NADP(+)).